A 65-amino-acid chain; its full sequence is Stress-associated endoplasmic reticulum protein 2 (65 aa).

The helical transmembrane segment at 38–58 threads the bilayer; it reads GPWLLALFVFVVCGSAIFQII.

This sequence belongs to the RAMP4 family. As to quaternary structure, interacts with SEC61B, SEC61A1 and the SEC61 complex. Interacts with CANX.

It localises to the membrane. It is found in the endoplasmic reticulum membrane. Interacts with target proteins during their translocation into the lumen of the endoplasmic reticulum. Protects unfolded target proteins against degradation during ER stress. May facilitate glycosylation of target proteins after termination of ER stress. May modulate the use of N-glycosylation sites on target proteins. This Bos taurus (Bovine) protein is Stress-associated endoplasmic reticulum protein 2 (SERP2).